Consider the following 180-residue polypeptide: MKPDKTENTEHGIEPVSKTKRKAEADALQAIGVTLTELPRDKLNKLDLPEALLDAVNEAKRITSNGALRRQMQYIGRLMRDIDTDPIVEQLQRWEGSHTEENARFHRLEQWRNRLIEDESALSEFISEFPNTEAQQVRNLIRNARREHAAGKPPKSSRELFKLLRSITEAPPPGTELSAD.

The span at 1 to 13 (MKPDKTENTEHGI) shows a compositional bias: basic and acidic residues. Residues 1-21 (MKPDKTENTEHGIEPVSKTKR) form a disordered region.

The protein belongs to the DarP family.

The protein localises to the cytoplasm. Its function is as follows. Member of a network of 50S ribosomal subunit biogenesis factors which assembles along the 30S-50S interface, preventing incorrect 23S rRNA structures from forming. Promotes peptidyl transferase center (PTC) maturation. The sequence is that of Dual-action ribosomal maturation protein DarP from Methylobacillus flagellatus (strain ATCC 51484 / DSM 6875 / VKM B-1610 / KT).